A 347-amino-acid chain; its full sequence is Globoside alpha-1,3-N-acetylgalactosaminyltransferase 1 (347 aa).

Residues 1 to 5 are Cytoplasmic-facing; it reads MHRRR. Residues 6–26 form a helical; Signal-anchor for type II membrane protein membrane-spanning segment; that stretch reads LALGLGFCLLAGTSLSVLWVY. Topologically, residues 27-347 are lumenal; the sequence is LENWLPVSYV…LDKDISCLRS (321 aa). Asn-108 carries an N-linked (GlcNAc...) asparagine glycan. Substrate is bound by residues 116–121, 206–208, and 228–231; these read FAVGKY, DVD, and HPSY. Residues Asp-206 and Asp-208 each coordinate Mn(2+). The Nucleophile role is filled by Glu-298.

The protein belongs to the glycosyltransferase 6 family. Mn(2+) is required as a cofactor. As to expression, widely expressed. Expressed at higher level in placenta, ovary and peripheral blood leukocyte, whereas it is weakly expressed in liver, thymus, and testis. Expressed in bone marrow erythroid cells.

It is found in the golgi apparatus membrane. The protein operates within protein modification; protein glycosylation. In terms of biological role, has lost the ability to synthesize Forssman glycolipid antigen (FORS1/FG). Might have acquired an alternative function in glycosphingolipid metabolism, but it remains to be established. It appears to have drifted more slowly than confirmed pseudogenes in the glycosyltransferase 6 family, suggesting that it has remained under evolutionary pressure. This is Globoside alpha-1,3-N-acetylgalactosaminyltransferase 1 from Homo sapiens (Human).